The sequence spans 295 residues: Acetylglutamate kinase (295 aa).

Substrate contacts are provided by residues 66 to 67 (GG), arginine 88, and asparagine 193.

Belongs to the acetylglutamate kinase family. ArgB subfamily.

It is found in the cytoplasm. The enzyme catalyses N-acetyl-L-glutamate + ATP = N-acetyl-L-glutamyl 5-phosphate + ADP. Its pathway is amino-acid biosynthesis; L-arginine biosynthesis; N(2)-acetyl-L-ornithine from L-glutamate: step 2/4. Functionally, catalyzes the ATP-dependent phosphorylation of N-acetyl-L-glutamate. The polypeptide is Acetylglutamate kinase (Sinorhizobium medicae (strain WSM419) (Ensifer medicae)).